Reading from the N-terminus, the 286-residue chain is Ribosomal RNA small subunit methyltransferase A (286 aa).

Residues His-11, Leu-13, Gly-44, Glu-65, Asp-90, and Asn-115 each contribute to the S-adenosyl-L-methionine site.

It belongs to the class I-like SAM-binding methyltransferase superfamily. rRNA adenine N(6)-methyltransferase family. RsmA subfamily.

The protein localises to the cytoplasm. The enzyme catalyses adenosine(1518)/adenosine(1519) in 16S rRNA + 4 S-adenosyl-L-methionine = N(6)-dimethyladenosine(1518)/N(6)-dimethyladenosine(1519) in 16S rRNA + 4 S-adenosyl-L-homocysteine + 4 H(+). Its function is as follows. Specifically dimethylates two adjacent adenosines (A1518 and A1519) in the loop of a conserved hairpin near the 3'-end of 16S rRNA in the 30S particle. May play a critical role in biogenesis of 30S subunits. The polypeptide is Ribosomal RNA small subunit methyltransferase A (Nostoc punctiforme (strain ATCC 29133 / PCC 73102)).